Consider the following 231-residue polypeptide: uncharacterized protein (231 aa).

10 to 34 (VVTGAGSGIGEAIATLLHEEGAKVV) lines the NADP(+) pocket. Residue Ser-140 coordinates substrate. Residue Tyr-153 is the Proton acceptor of the active site.

It belongs to the short-chain dehydrogenases/reductases (SDR) family.

This is an uncharacterized protein from Staphylococcus aureus (strain MRSA252).